Reading from the N-terminus, the 393-residue chain is Beta-1,3-galactosyltransferase 7 (393 aa).

A helical; Signal-anchor for type II membrane protein membrane pass occupies residues 9 to 29 (VISLKWVPFLCISFFALGAIF). The interval 89 to 112 (SLDKSVSTLSSTRSSQEMVDGSET) is disordered. Over residues 93-103 (SVSTLSSTRSS) the composition is skewed to low complexity.

This sequence belongs to the glycosyltransferase 31 family. Mn(2+) is required as a cofactor. As to expression, expressed in leaves, stems, flowers and siliques.

The protein resides in the golgi apparatus membrane. Its pathway is protein modification; protein glycosylation. Functionally, beta-1,3-galactosyltransferase that transfers galactose from UDP-galactose to substrates with a terminal glycosyl residue. The protein is Beta-1,3-galactosyltransferase 7 (B3GALT7) of Arabidopsis thaliana (Mouse-ear cress).